The following is a 316-amino-acid chain: Ecto-ADP-ribosyltransferase 5 (316 aa).

The first 23 residues, 1 to 23 (MIQATLLISLSCLSFYTLGSGVR), serve as a signal peptide directing secretion. An intrachain disulfide couples C50 to C266. An N-linked (GlcNAc...) asparagine glycan is attached at N68. A TR mART core domain is found at 70 to 261 (TRLRESWETA…MTLSSSDQMC (192 aa)). Y107 is an NAD(+) binding site. N109 carries an N-linked (GlcNAc...) asparagine glycan. The NAD(+) site is built by R168 and Q188. The active site involves R168. S191 is a catalytic residue. S222 contacts NAD(+). E229 is an active-site residue. N-linked (GlcNAc...) asparagine glycosylation is found at N242 and N248.

This sequence belongs to the Arg-specific ADP-ribosyltransferase family.

Its subcellular location is the secreted. It localises to the membrane. It catalyses the reaction L-arginyl-[protein] + NAD(+) = N(omega)-(ADP-D-ribosyl)-L-arginyl-[protein] + nicotinamide + H(+). The chain is Ecto-ADP-ribosyltransferase 5 (ART5) from Bos taurus (Bovine).